A 199-amino-acid chain; its full sequence is Phosphatidylethanolamine N-methyltransferase (199 aa).

Residues 1-12 (MTRLLGYVDPLD) lie on the Lumenal side of the membrane. Positions 13–33 (PSFVAAVITITFNPLYWNVVA) form an intramembrane region, helical. Residues 34-45 (RWEHKTRKLSRA) lie on the Lumenal side of the membrane. Residues 46–66 (FGSPYLACYSLSVTILLLNFL) form a helical membrane-spanning segment. The Cytoplasmic portion of the chain corresponds to 67–93 (RSHCFTQAMLSQPRMESLDTPAAYSLG). The helical transmembrane segment at 94–114 (LALLGLGVVLVLSSFFALGFA) threads the bilayer. 98 to 100 (GLG) is an S-adenosyl-L-methionine binding site. Residues 115-157 (GTFLGDYFGILKEARVTVFPFNILDNPMYWGSTANYLGWAIMH) are Lumenal-facing. A helical transmembrane segment spans residues 158–178 (ASPTGLLLTVLVALTYIVALL). Topologically, residues 179–199 (YEEPFTAEIYRQKASGSHKRS) are cytoplasmic. 180–181 (EE) is an S-adenosyl-L-methionine binding site.

Belongs to the class VI-like SAM-binding methyltransferase superfamily. PEMT/PEM2 methyltransferase family. Post-translationally, isoform 2 is N-glycosylated with high-mannose oligosaccharides. In terms of tissue distribution, primarily expressed in liver (at protein level).

Its subcellular location is the endoplasmic reticulum. It localises to the endoplasmic reticulum membrane. It is found in the mitochondrion membrane. The catalysed reaction is a 1,2-diacyl-sn-glycero-3-phospho-N-methylethanolamine + S-adenosyl-L-methionine = a 1,2-diacyl-sn-glycero-3-phospho-N,N-dimethylethanolamine + S-adenosyl-L-homocysteine + H(+). It catalyses the reaction a 1,2-diacyl-sn-glycero-3-phospho-N,N-dimethylethanolamine + S-adenosyl-L-methionine = a 1,2-diacyl-sn-glycero-3-phosphocholine + S-adenosyl-L-homocysteine + H(+). The enzyme catalyses a 1,2-diacyl-sn-glycero-3-phosphoethanolamine + S-adenosyl-L-methionine = a 1,2-diacyl-sn-glycero-3-phospho-N-methylethanolamine + S-adenosyl-L-homocysteine + H(+). It carries out the reaction 1,2-di-(9Z-octadecenoyl)-sn-glycero-3-phosphoethanolamine + S-adenosyl-L-methionine = 1,2-di-(9Z-octadecenoyl)-sn-glycero-3-phospho-N-methylethanolamine + S-adenosyl-L-homocysteine + H(+). The catalysed reaction is 1,2-di-(9Z-octadecenoyl)-sn-glycero-3-phospho-N-methylethanolamine + S-adenosyl-L-methionine = 1,2-di-(9Z-octadecenoyl)-sn-glycero-3-phospho-N,N-dimethylethanolamine + S-adenosyl-L-homocysteine + H(+). It catalyses the reaction 1,2-di-(9Z-octadecenoyl)-sn-glycero-3-phospho-N,N-dimethylethanolamine + S-adenosyl-L-methionine = 1,2-di-(9Z-octadecenoyl)-sn-glycero-3-phosphocholine + S-adenosyl-L-homocysteine + H(+). The enzyme catalyses 1,2-di-(9Z,12Z-octadecadienoyl)-sn-glycero-3-phosphoethanolamine + S-adenosyl-L-methionine = 1,2-di-(9Z,12Z-octadecadienoyl)-sn-glycero-3-phospho-N-methylethanolamine + S-adenosyl-L-homocysteine + H(+). It carries out the reaction 1,2-di-(9Z,12Z-octadecadienoyl)-sn-glycero-3-phospho-N-methylethanolamine + S-adenosyl-L-methionine = 1,2-di-(9Z,12Z-octadecadienoyl)-sn-glycero-3-phospho-N,N-dimethylethanolamine + S-adenosyl-L-homocysteine + H(+). The catalysed reaction is 1,2-di-(9Z,12Z-octadecadienoyl)-sn-glycero-3-phospho-N,N-dimethylethanolamine + S-adenosyl-L-methionine = 1,2-di-(9Z,12Z-octadecadienoyl)-sn-glycero-3-phosphocholine + S-adenosyl-L-homocysteine + H(+). It catalyses the reaction 1,2-di-(9Z,12Z,15Z-octadecatrienoyl)-sn-glycero-3-phosphoethanolamine + S-adenosyl-L-methionine = 1,2-di-(9Z,12Z,15Z-octadecatrienoyl)-sn-glycero-3-phospho-N-methylethanolamine + S-adenosyl-L-homocysteine + H(+). The enzyme catalyses 1,2-di-(9Z,12Z,15Z-octadecatrienoyl)-sn-glycero-3-phospho-N-methylethanolamine + S-adenosyl-L-methionine = 1,2-di-(9Z,12Z,15Z-octadecatrienoyl)-sn-glycero-3-phospho-N,N-dimethylethanolamine + S-adenosyl-L-homocysteine + H(+). It carries out the reaction 1,2-di-(9Z,12Z,15Z-octadecatrienoyl)-sn-glycero-3-phospho-N,N-dimethylethanolamine + S-adenosyl-L-methionine = 1,2-di-(9Z,12Z,15Z-octadecatrienoyl)-sn-glycero-3-phosphocholine + S-adenosyl-L-homocysteine + H(+). The catalysed reaction is 1-hexadecanoyl-2-(4Z,7Z,10Z,13Z,16Z,19Z-docosahexaenoyl)-sn-glycero-3-phosphoethanolamine + S-adenosyl-L-methionine = 1-hexadecanoyl-2-(4Z,7Z,10Z,13Z,16Z,19Z-docosahexaenoyl)-sn-glycero-3-phospho-N-methylethanolamine + S-adenosyl-L-homocysteine + H(+). It catalyses the reaction 1-hexadecanoyl-2-(4Z,7Z,10Z,13Z,16Z,19Z-docosahexaenoyl)-sn-glycero-3-phospho-N-methylethanolamine + S-adenosyl-L-methionine = 1-hexadecanoyl-2-(4Z,7Z,10Z,13Z,16Z,19Z-docosahexaenoyl)-sn-glycero-3-phospho-N,N-dimethylethanolamine + S-adenosyl-L-homocysteine + H(+). The enzyme catalyses 1-hexadecanoyl-2-(4Z,7Z,10Z,13Z,16Z,19Z-docosahexaenoyl)-sn-glycero-3-phospho-N,N-dimethylethanolamine + S-adenosyl-L-methionine = 1-hexadecanoyl-2-(4Z,7Z,10Z,13Z,16Z,19Z-docosahexaenoyl)-sn-glycero-3-phosphocholine + S-adenosyl-L-homocysteine + H(+). Its pathway is phospholipid metabolism; phosphatidylcholine biosynthesis. Its activity is regulated as follows. The first methylation is rate-limiting. Functionally, catalyzes the three sequential steps of the methylation pathway for the biosynthesis of phosphatidylcholine, a critical and essential component for membrane structure. Uses S-adenosylmethionine (S-adenosyl-L-methionine, SAM or AdoMet) as the methyl group donor for the methylation of phosphatidylethanolamine (1,2-diacyl-sn-glycero-3-phosphoethanolamine, PE) to phosphatidylmonomethylethanolamine (1,2-diacyl-sn-glycero-3-phospho-N-methylethanolamine, PMME), PMME to phosphatidyldimethylethanolamine (1,2-diacyl-sn-glycero-3-phospho-N,N-dimethylethanolamine, PDME), and PDME to phosphatidylcholine (1,2-diacyl-sn-glycero-3-phosphocholine, PC), producing S-adenosyl-L-homocysteine in each step. Responsible for approximately 30% of hepatic PC with the CDP-choline pathway accounting for the other 70%. Its function is as follows. Catalyzes the three sequential steps of the methylation of 1,2-diacyl-sn-glycero-3-phospho-N-methylethanolamine (PMME) to 1,2-diacyl-sn-glycero-3-phospho-N,N-dimethylethanolamine (PDME) more efficiently than isoform 2. Induces increase in PC species with longer polyunsaturated chains than isoform 2. In terms of biological role, produces a higher increase in the level of PC species containing long chains with three double bonds than isoform 1. This Homo sapiens (Human) protein is Phosphatidylethanolamine N-methyltransferase.